The following is an 87-amino-acid chain: Elongation factor Ts, chloroplastic (87 aa).

Belongs to the EF-Ts family.

It is found in the plastid. The protein localises to the chloroplast. Functionally, associates with the EF-Tu.GDP complex and induces the exchange of GDP to GTP. It remains bound to the aminoacyl-tRNA.EF-Tu.GTP complex up to the GTP hydrolysis stage on the ribosome. The chain is Elongation factor Ts, chloroplastic (tsf) from Antithamnion sp. (Red alga).